Here is a 244-residue protein sequence, read N- to C-terminus: 1-(5-phosphoribosyl)-5-[(5-phosphoribosylamino)methylideneamino] imidazole-4-carboxamide isomerase (244 aa).

The active-site Proton acceptor is D10. Residue D129 is the Proton donor of the active site.

This sequence belongs to the HisA/HisF family.

It localises to the cytoplasm. It catalyses the reaction 1-(5-phospho-beta-D-ribosyl)-5-[(5-phospho-beta-D-ribosylamino)methylideneamino]imidazole-4-carboxamide = 5-[(5-phospho-1-deoxy-D-ribulos-1-ylimino)methylamino]-1-(5-phospho-beta-D-ribosyl)imidazole-4-carboxamide. It functions in the pathway amino-acid biosynthesis; L-histidine biosynthesis; L-histidine from 5-phospho-alpha-D-ribose 1-diphosphate: step 4/9. The protein is 1-(5-phosphoribosyl)-5-[(5-phosphoribosylamino)methylideneamino] imidazole-4-carboxamide isomerase of Rhodococcus erythropolis (strain PR4 / NBRC 100887).